A 506-amino-acid chain; its full sequence is UDP-N-acetylglucosamine--peptide N-acetylglucosaminyltransferase GtfA subunit (506 aa).

The segment at 1–78 is N-terminus R-fold-1; sequence MTVYNINLGI…FTDIKIAPTT (78 aa). UDP is bound at residue 16-19; the sequence is GVEY. The extended beta-sheet domain stretch occupies residues 79–195; the sequence is VTLDQVLAQV…LYRFPDRIFY (117 aa). A C-terminus R-fold-1 region spans residues 196 to 306; sequence SKAELVRYFL…QPQIATIPVG (111 aa). Histidine 242 lines the N-acetyl-D-glucosamine pocket. An R-fold-2 region spans residues 307–506; the sequence is SLDQLTYPKE…LKEVRDDSAL (200 aa). Residues arginine 328, tyrosine 357, and 383–385 contribute to the UDP site; that span reads GHA. 405 to 407 contributes to the N-acetyl-D-glucosamine binding site; the sequence is GFG. Threonine 409 is a UDP binding site.

It belongs to the glycosyltransferase group 1 family. Glycosyltransferase 4 subfamily. In terms of assembly, forms a heterotetramer with 2 subunits each of GtfA and GtfB. Part of the accessory SecA2/SecY2 protein translocation apparatus required to export cell wall protein GspB.

It localises to the cytoplasm. Its subcellular location is the cell membrane. The enzyme catalyses L-seryl-[protein] + UDP-N-acetyl-alpha-D-glucosamine = 3-O-[N-acetyl-alpha-D-glucosaminyl]-L-seryl-[protein] + UDP + H(+). It participates in protein modification; protein glycosylation. In terms of biological role, required for polymorphic O-glycosylation of GspB, a serine-rich repeat cell wall protein encoded upstream in the same operon. Catalyzes the first step in glycosylation by transferring N-acetylglucosamine from UDP-GlcNAc to serine residues in GspB. Part of the accessory SecA2/SecY2 system specifically required to export GspB. Upon coexpression in E.coli with GtfB glycosylates GspB constructs. Glycosylation probably occurs intracellularly. Requires GtfB for glycosylation activity, it has no activity alone. Does not use UDP-glucose as substrate. Has a fast, probably processive glycosylation phase followed by a slower, non-processive phase. The enzyme probably modifies its tertiary conformation by opening and closing its intersubunit interfaces to accomodate the increasingly glycosylated substrate; protein substrate recognition is provided by GtfB. This is UDP-N-acetylglucosamine--peptide N-acetylglucosaminyltransferase GtfA subunit from Streptococcus gordonii.